The chain runs to 505 residues: Probable cytosol aminopeptidase (505 aa).

Residues Lys268 and Asp273 each coordinate Mn(2+). Residue Lys280 is part of the active site. Asp291, Asp350, and Glu352 together coordinate Mn(2+). The active site involves Arg354.

This sequence belongs to the peptidase M17 family. Mn(2+) is required as a cofactor.

Its subcellular location is the cytoplasm. It carries out the reaction Release of an N-terminal amino acid, Xaa-|-Yaa-, in which Xaa is preferably Leu, but may be other amino acids including Pro although not Arg or Lys, and Yaa may be Pro. Amino acid amides and methyl esters are also readily hydrolyzed, but rates on arylamides are exceedingly low.. The enzyme catalyses Release of an N-terminal amino acid, preferentially leucine, but not glutamic or aspartic acids.. Presumably involved in the processing and regular turnover of intracellular proteins. Catalyzes the removal of unsubstituted N-terminal amino acids from various peptides. This Syntrophobacter fumaroxidans (strain DSM 10017 / MPOB) protein is Probable cytosol aminopeptidase.